Reading from the N-terminus, the 291-residue chain is BTB/POZ domain-containing protein 19 (291 aa).

In terms of domain architecture, BTB spans 29-98 (SDVRFVVGQE…LYTNSAKLQR (70 aa)). The 101-residue stretch at 134-234 (CEALQVAVTF…LALLAPAELS (101 aa)) folds into the BACK domain.

The chain is BTB/POZ domain-containing protein 19 (BTBD19) from Bos taurus (Bovine).